Consider the following 589-residue polypeptide: ATP-dependent lipid A-core flippase (589 aa).

5 consecutive transmembrane segments (helical) span residues 29–49, 68–88, 157–177, 254–274, and 283–303; these read WLLV…STFL, ALWL…AGYI, VIGA…AILL, LSSA…LLIA, and LSPG…PALK. The ABC transmembrane type-1 domain maps to 32 to 314; it reads VVAACGALLE…LTNVQNMLQS (283 aa). An ABC transporter domain is found at 346–582; that stretch reads IEFRGITARY…DGLYAYLYSM (237 aa). 380 to 387 contributes to the ATP binding site; that stretch reads GRSGSGKS.

It belongs to the ABC transporter superfamily. Lipid exporter (TC 3.A.1.106) family. Homodimer.

The protein localises to the cell inner membrane. The catalysed reaction is ATP + H2O + lipid A-core oligosaccharideSide 1 = ADP + phosphate + lipid A-core oligosaccharideSide 2.. Involved in lipopolysaccharide (LPS) biosynthesis. Translocates lipid A-core from the inner to the outer leaflet of the inner membrane. Transmembrane domains (TMD) form a pore in the inner membrane and the ATP-binding domain (NBD) is responsible for energy generation. The sequence is that of ATP-dependent lipid A-core flippase from Xylella fastidiosa (strain 9a5c).